Consider the following 153-residue polypeptide: Ribonuclease H (153 aa).

Residues 1 to 141 (MKLVEIFTDG…CDELAKAGAN (141 aa)) enclose the RNase H type-1 domain. Residues D9, E47, D69, and D133 each coordinate Mg(2+).

The protein belongs to the RNase H family. Monomer. Requires Mg(2+) as cofactor.

The protein resides in the cytoplasm. It catalyses the reaction Endonucleolytic cleavage to 5'-phosphomonoester.. Its function is as follows. Endonuclease that specifically degrades the RNA of RNA-DNA hybrids. This chain is Ribonuclease H, found in Actinobacillus pleuropneumoniae serotype 5b (strain L20).